The primary structure comprises 127 residues: MADVTKDDVVEFIANMSVLELSELVKELEEKFGVSAAAPVAMMAAGGAADAGAAAEEQTEFDVILEAAGDKKIGVIKEVRAITGLGLKEAKALVDEAPKPVKEGIVKEEAEKIKAQLEAAGAQVSVK.

The protein belongs to the bacterial ribosomal protein bL12 family. Homodimer. Part of the ribosomal stalk of the 50S ribosomal subunit. Forms a multimeric L10(L12)X complex, where L10 forms an elongated spine to which 2 to 4 L12 dimers bind in a sequential fashion. Binds GTP-bound translation factors.

Its function is as follows. Forms part of the ribosomal stalk which helps the ribosome interact with GTP-bound translation factors. Is thus essential for accurate translation. This chain is Large ribosomal subunit protein bL12, found in Desulforapulum autotrophicum (strain ATCC 43914 / DSM 3382 / VKM B-1955 / HRM2) (Desulfobacterium autotrophicum).